The sequence spans 236 residues: Small ribosomal subunit protein uS3 (236 aa).

Positions 39-107 (VREFLKKKLA…PVHLNIEEVR (69 aa)) constitute a KH type-2 domain. The segment at 215–236 (AAQPAEPEKKVRKSGAKNAATS) is disordered.

This sequence belongs to the universal ribosomal protein uS3 family. In terms of assembly, part of the 30S ribosomal subunit. Forms a tight complex with proteins S10 and S14.

Binds the lower part of the 30S subunit head. Binds mRNA in the 70S ribosome, positioning it for translation. The protein is Small ribosomal subunit protein uS3 of Methylobacillus flagellatus (strain ATCC 51484 / DSM 6875 / VKM B-1610 / KT).